We begin with the raw amino-acid sequence, 807 residues long: Glycerol-3-phosphate acyltransferase (807 aa).

Positions 308–313 (CHRSHM) match the HXXXXD motif motif.

This sequence belongs to the GPAT/DAPAT family.

It localises to the cell inner membrane. It catalyses the reaction sn-glycerol 3-phosphate + an acyl-CoA = a 1-acyl-sn-glycero-3-phosphate + CoA. It functions in the pathway phospholipid metabolism; CDP-diacylglycerol biosynthesis; CDP-diacylglycerol from sn-glycerol 3-phosphate: step 1/3. This is Glycerol-3-phosphate acyltransferase from Shewanella baltica (strain OS155 / ATCC BAA-1091).